Here is a 278-residue protein sequence, read N- to C-terminus: Mediator of RNA polymerase II transcription subunit 18 (278 aa).

Belongs to the Mediator complex subunit 18 family. As to quaternary structure, component of the Mediator complex.

Its subcellular location is the nucleus. In terms of biological role, component of the Mediator complex, a coactivator involved in the regulated transcription of nearly all RNA polymerase II-dependent genes. Mediator functions as a bridge to convey information from gene-specific regulatory proteins to the basal RNA polymerase II transcription machinery. Mediator is recruited to promoters by direct interactions with regulatory proteins and serves as a scaffold for the assembly of a functional preinitiation complex with RNA polymerase II and the general transcription factors. The sequence is that of Mediator of RNA polymerase II transcription subunit 18 (srb5) from Aspergillus clavatus (strain ATCC 1007 / CBS 513.65 / DSM 816 / NCTC 3887 / NRRL 1 / QM 1276 / 107).